The sequence spans 208 residues: N-(5'-phosphoribosyl)anthranilate isomerase (208 aa).

It belongs to the TrpF family.

It catalyses the reaction N-(5-phospho-beta-D-ribosyl)anthranilate = 1-(2-carboxyphenylamino)-1-deoxy-D-ribulose 5-phosphate. It functions in the pathway amino-acid biosynthesis; L-tryptophan biosynthesis; L-tryptophan from chorismate: step 3/5. The chain is N-(5'-phosphoribosyl)anthranilate isomerase from Nitrosospira multiformis (strain ATCC 25196 / NCIMB 11849 / C 71).